The following is an 878-amino-acid chain: MPTVHNSEYIKELLVDNTSYKIYDINKAASDIGISLNKLPYSLRVLLENVLRTSGNKENLLVFKEWLKTKKSNTEIDFMPARVLMQDFTGVPAIVDLAAMRDAMQKIGCNPLKINPLIPVDLVIDHSVSVDSYGLKESFEQNVQMEMKRNIERYQFLKWGQQAFNNFKVVPPGTGICHQVNLEYLSKVVWYNDGTAYPDSLVGTDSHTTMVNGLSVLGWGVGGIEAEAAMLGQPLTMIIPEVIGVKLTGKLEGMATATDLVLTITEMLRRTKVVGKFVEFFGYGLSNLTISDRATISNMSPEYGATCGFFPIDQETIKYLEITGRETRQIKLVEKYATEQNLWYNFEDTQEYTEVLELDLSTVYSSLAGPKRPQDRVNLSFVESNFKNELPYFALENQDIDKKYAVANQNYEIGNGDVVIAAITSCTNTSNPSVMIGAALLAKKALEHGLNVKPWVKTSLAPGSKVVTEYLKISGLDKYLDALGFNLVGYGCTTCIGNSGSLNPEIENTINKNRLVVASVLSGNRNFEGRINPLTKASYLASPILVVAYALSGTLNIDLTTTPIGANIYLKDIWPSQKEIDAVIANSINPSMFIEKYADVFNGTKEWHDLHITTGTNYNWDKNSTYINNPPYFDNICSENTIKDIKSAKILAIFGDSITTDHISPAGSISKNSPAAKYLIEHNIEPLNFNSYGSRRGNHEVMMRGTFANIRIKNEMCNGVEGGFTINQLSGVQQTIYDAAMDYQAHDIPLVVFAGKEYGSGSSRDWAAKGPGLLGIKAIIAESFERIHRSNLVGMGILPLTFTGNNTRLSLKLDGSETIDIIGLSKNIRPFNLVKCVIKKQTNEISTIDLILQIFTENEINYIKHGSIMQFVVESLKG.

3 residues coordinate [4Fe-4S] cluster: cysteine 426, cysteine 492, and cysteine 495.

The protein belongs to the aconitase/IPM isomerase family. Monomer. Requires [4Fe-4S] cluster as cofactor.

It catalyses the reaction citrate = D-threo-isocitrate. The catalysed reaction is (2S,3R)-3-hydroxybutane-1,2,3-tricarboxylate = 2-methyl-cis-aconitate + H2O. The protein operates within carbohydrate metabolism; tricarboxylic acid cycle; isocitrate from oxaloacetate: step 2/2. Its pathway is organic acid metabolism; propanoate degradation. Functionally, involved in the catabolism of short chain fatty acids (SCFA) via the tricarboxylic acid (TCA)(acetyl degradation route) and probably the 2-methylcitrate cycle I (propionate degradation route). Catalyzes the reversible isomerization of citrate to isocitrate via cis-aconitate. Could catalyze the hydration of 2-methyl-cis-aconitate to yield (2R,3S)-2-methylisocitrate. The apo form of AcnA functions as a RNA-binding regulatory protein. The polypeptide is Aconitate hydratase A (acnA) (Rickettsia typhi (strain ATCC VR-144 / Wilmington)).